The primary structure comprises 523 residues: Peptidyl-prolyl cis-trans isomerase 4 (523 aa).

In terms of domain architecture, U-box spans 38 to 111 (KRLPINHCSL…GKFRCPVTFR (74 aa)). One can recognise a PPIase cyclophilin-type domain in the interval 278 to 433 (KNAFVRLVTN…VSVVIMRAEV (156 aa)).

It belongs to the cyclophilin-type PPIase family. PPIL2 subfamily. As to quaternary structure, interacts with mep-1. In terms of tissue distribution, exclusively in the larval body wall striated muscle cells.

The protein localises to the nucleus. It carries out the reaction [protein]-peptidylproline (omega=180) = [protein]-peptidylproline (omega=0). It catalyses the reaction S-ubiquitinyl-[E2 ubiquitin-conjugating enzyme]-L-cysteine + [acceptor protein]-L-lysine = [E2 ubiquitin-conjugating enzyme]-L-cysteine + N(6)-ubiquitinyl-[acceptor protein]-L-lysine.. The protein operates within protein modification; protein ubiquitination. May catalyze the cis-trans isomerization of proline imidic peptide bonds in oligopeptides thereby assisting the folding of proteins. May also function as a chaperone, playing a role in intracellular transport of proteins. May also have a protein ubiquitin ligase activity acting as an E3 ubiquitin protein ligase or as a ubiquitin-ubiquitin ligase promoting elongation of ubiquitin chains on proteins. Influences the hermaphrodite switch from spermatogenesis to oogenesis. Required for body wall muscle cell development. The protein is Peptidyl-prolyl cis-trans isomerase 4 (cyn-4) of Caenorhabditis elegans.